The sequence spans 199 residues: Recombination protein RecR (199 aa).

The C4-type zinc finger occupies 57-72 (CQSCRTFTEETYCPIC). The Toprim domain occupies 81–176 (SVICVVETPA…AVSRIAHGVP (96 aa)).

The protein belongs to the RecR family.

Functionally, may play a role in DNA repair. It seems to be involved in an RecBC-independent recombinational process of DNA repair. It may act with RecF and RecO. The chain is Recombination protein RecR from Shewanella piezotolerans (strain WP3 / JCM 13877).